Here is a 519-residue protein sequence, read N- to C-terminus: Cytochrome P450 4A11 (519 aa).

Positions 1 to 4 are excised as a propeptide; the sequence is MSVS. Residue Glu321 participates in heme binding. Ser440 carries the phosphoserine modification. Cys457 contacts heme.

This sequence belongs to the cytochrome P450 family. It depends on heme as a cofactor. As to expression, expressed in liver. Expressed in S2 and S3 segments of proximal tubules in cortex and outer medulla of kidney.

It localises to the endoplasmic reticulum membrane. It is found in the microsome membrane. The catalysed reaction is an organic molecule + reduced [NADPH--hemoprotein reductase] + O2 = an alcohol + oxidized [NADPH--hemoprotein reductase] + H2O + H(+). It catalyses the reaction an omega-methyl-long-chain fatty acid + reduced [NADPH--hemoprotein reductase] + O2 = an omega-hydroxy-long-chain fatty acid + oxidized [NADPH--hemoprotein reductase] + H2O + H(+). The enzyme catalyses dodecanoate + reduced [NADPH--hemoprotein reductase] + O2 = 12-hydroxydodecanoate + oxidized [NADPH--hemoprotein reductase] + H2O + H(+). It carries out the reaction tetradecanoate + reduced [NADPH--hemoprotein reductase] + O2 = 14-hydroxytetradecanoate + oxidized [NADPH--hemoprotein reductase] + H2O + H(+). The catalysed reaction is hexadecanoate + reduced [NADPH--hemoprotein reductase] + O2 = 16-hydroxyhexadecanoate + oxidized [NADPH--hemoprotein reductase] + H2O + H(+). It catalyses the reaction (9Z)-octadecenoate + reduced [NADPH--hemoprotein reductase] + O2 = 18-hydroxy-(9Z)-octadecenoate + oxidized [NADPH--hemoprotein reductase] + H2O + H(+). The enzyme catalyses (5Z,8Z,11Z,14Z)-eicosatetraenoate + reduced [NADPH--hemoprotein reductase] + O2 = 20-hydroxy-(5Z,8Z,11Z,14Z)-eicosatetraenoate + oxidized [NADPH--hemoprotein reductase] + H2O + H(+). It carries out the reaction 22-hydroxydocosanoate + reduced [NADPH--hemoprotein reductase] + O2 = 22-oxodocosanoate + oxidized [NADPH--hemoprotein reductase] + 2 H2O + H(+). The catalysed reaction is 22-oxodocosanoate + reduced [NADPH--hemoprotein reductase] + O2 = docosanedioate + oxidized [NADPH--hemoprotein reductase] + H2O + 2 H(+). It catalyses the reaction (9R,10S)-epoxy-octadecanoate + reduced [NADPH--hemoprotein reductase] + O2 = 18-hydroxy-(9R,10S)-epoxy-octadecanoate + oxidized [NADPH--hemoprotein reductase] + H2O + H(+). The enzyme catalyses 3-hydroxyhexadecanoate + reduced [NADPH--hemoprotein reductase] + O2 = 3,16-dihydroxyhexadecanoate + oxidized [NADPH--hemoprotein reductase] + H2O + H(+). It participates in lipid metabolism; arachidonate metabolism. The protein operates within lipid metabolism; oxylipin biosynthesis. Activated by cytochrome b5. A cytochrome P450 monooxygenase involved in the metabolism of fatty acids and their oxygenated derivatives (oxylipins). Mechanistically, uses molecular oxygen inserting one oxygen atom into a substrate, and reducing the second into a water molecule, with two electrons provided by NADPH via cytochrome P450 reductase (CPR; NADPH-ferrihemoprotein reductase). Catalyzes predominantly the oxidation of the terminal carbon (omega-oxidation) of saturated and unsaturated fatty acids, the catalytic efficiency decreasing in the following order: dodecanoic &gt; tetradecanoic &gt; (9Z)-octadecenoic &gt; (9Z,12Z)-octadecadienoic &gt; hexadecanoic acid. Acts as a major omega-hydroxylase for dodecanoic (lauric) acid in liver. Participates in omega-hydroxylation of (5Z,8Z,11Z,14Z)-eicosatetraenoic acid (arachidonate) to 20-hydroxyeicosatetraenoic acid (20-HETE), a signaling molecule acting both as vasoconstrictive and natriuretic with overall effect on arterial blood pressure. Can also catalyze the oxidation of the penultimate carbon (omega-1 oxidation) of fatty acids with lower efficiency. May contribute to the degradation of saturated very long-chain fatty acids (VLCFAs) such as docosanoic acid, by catalyzing successive omega-oxidations to the corresponding dicarboxylic acid, thereby initiating chain shortening. Omega-hydroxylates (9R,10S)-epoxy-octadecanoate stereoisomer. Plays a minor role in omega-oxidation of long-chain 3-hydroxy fatty acids. Has little activity toward prostaglandins A1 and E1. The chain is Cytochrome P450 4A11 from Homo sapiens (Human).